The primary structure comprises 423 residues: Serine hydroxymethyltransferase (423 aa).

119–121 (GHI) contacts (6S)-5,6,7,8-tetrahydrofolate. Lysine 225 bears the N6-(pyridoxal phosphate)lysine mark.

It belongs to the SHMT family. In terms of assembly, homodimer. Requires pyridoxal 5'-phosphate as cofactor.

Its subcellular location is the cytoplasm. The catalysed reaction is (6R)-5,10-methylene-5,6,7,8-tetrahydrofolate + glycine + H2O = (6S)-5,6,7,8-tetrahydrofolate + L-serine. Its pathway is one-carbon metabolism; tetrahydrofolate interconversion. The protein operates within amino-acid biosynthesis; glycine biosynthesis; glycine from L-serine: step 1/1. Catalyzes the reversible interconversion of serine and glycine with tetrahydrofolate (THF) serving as the one-carbon carrier. Also exhibits THF-independent aldolase activity toward beta-hydroxyamino acids, producing glycine and aldehydes, via a retro-aldol mechanism. The polypeptide is Serine hydroxymethyltransferase (Methanocella arvoryzae (strain DSM 22066 / NBRC 105507 / MRE50)).